The following is a 133-amino-acid chain: Histone H2A.1 (133 aa).

Residues 1 to 23 (MSTTGKGGKAKGKTASSKQVSRS) are disordered. Ser-2 is subject to N-acetylserine. An N6-acetyllysine mark is found at Lys-6, Lys-9, Lys-11, Lys-13, and Lys-18. A Phosphoserine modification is found at Ser-123. A Glycyl lysine isopeptide (Lys-Gly) (interchain with G-Cter in ubiquitin) cross-link involves residue Lys-124. Residue Ser-129 is modified to Phosphoserine.

It belongs to the histone H2A family. As to quaternary structure, the nucleosome is a histone octamer containing two molecules each of H2A, H2B, H3 and H4 assembled in one H3-H4 heterotetramer and two H2A-H2B heterodimers. The octamer wraps approximately 147 bp of DNA. Monoubiquitination of Lys-124 gives a specific tag for epigenetic transcriptional repression. Post-translationally, acetylation occurs almost exclusively in the MAC.

It localises to the nucleus. It is found in the chromosome. Its function is as follows. Core component of nucleosome. Nucleosomes wrap and compact DNA into chromatin, limiting DNA accessibility to the cellular machineries which require DNA as a template. Histones thereby play a central role in transcription regulation, DNA repair, DNA replication and chromosomal stability. DNA accessibility is regulated via a complex set of post-translational modifications of histones, also called histone code, and nucleosome remodeling. This Tetrahymena pyriformis protein is Histone H2A.1 (HTA2).